Here is a 222-residue protein sequence, read N- to C-terminus: Type II restriction enzyme AbrI (222 aa).

Disordered regions lie at residues 21 to 45 and 161 to 222; these read GNRE…RRDR and NQRR…SPRI. Over residues 22–42 the composition is skewed to basic and acidic residues; sequence NREKARQKQQESGKPDQGERR. Residues 188 to 202 are compositionally biased toward low complexity; it reads SSASGSSRSSFTPRP.

The protein belongs to the XhoI type II restriction endonuclease family.

The catalysed reaction is Endonucleolytic cleavage of DNA to give specific double-stranded fragments with terminal 5'-phosphates.. Functionally, a P subtype restriction enzyme that recognizes the double-stranded sequence 5'-CTCGAG-3' and cleaves after C-1. In Azospirillum brasilense, this protein is Type II restriction enzyme AbrI (abrIR).